The chain runs to 365 residues: Probable caffeine synthase 2 (365 aa).

Y19 serves as a coordination point for S-adenosyl-L-homocysteine. T26 is a binding site for caffeine. Positions 62, 99, 100, 134, and 135 each coordinate S-adenosyl-L-homocysteine. The caffeine site is built by Y152, H155, and W156. N173 is a binding site for Mg(2+). R221 is a caffeine binding site. Mg(2+) is bound by residues D259, F261, and N262. F317 is a binding site for caffeine.

Belongs to the methyltransferase superfamily. Type-7 methyltransferase family. It depends on Mg(2+) as a cofactor.

The enzyme catalyses 7-methylxanthine + S-adenosyl-L-methionine = theobromine + S-adenosyl-L-homocysteine + H(+). It carries out the reaction theobromine + S-adenosyl-L-methionine = caffeine + S-adenosyl-L-homocysteine + H(+). It catalyses the reaction 1,7-dimethylxanthine + S-adenosyl-L-methionine = caffeine + S-adenosyl-L-homocysteine + H(+). It participates in alkaloid biosynthesis. In terms of biological role, may be involved in the biosynthesis of caffeine. Catalyzes the conversion of 7-methylxanthine (7mX) to theobromine and of theobromine to caffeine. Has 1-N-methylation activity. The protein is Probable caffeine synthase 2 of Camellia sinensis (Tea plant).